We begin with the raw amino-acid sequence, 193 residues long: Acyl carrier protein phosphodiesterase (193 aa).

The protein belongs to the AcpH family.

The catalysed reaction is holo-[ACP] + H2O = apo-[ACP] + (R)-4'-phosphopantetheine + H(+). Functionally, converts holo-ACP to apo-ACP by hydrolytic cleavage of the phosphopantetheine prosthetic group from ACP. The polypeptide is Acyl carrier protein phosphodiesterase (Shigella boydii serotype 18 (strain CDC 3083-94 / BS512)).